A 451-amino-acid chain; its full sequence is Trigger factor (451 aa).

The region spanning 171–256 (GDRVKVNFKG…ATAIEAPEDK (86 aa)) is the PPIase FKBP-type domain.

It belongs to the FKBP-type PPIase family. Tig subfamily.

It localises to the cytoplasm. The catalysed reaction is [protein]-peptidylproline (omega=180) = [protein]-peptidylproline (omega=0). Functionally, involved in protein export. Acts as a chaperone by maintaining the newly synthesized protein in an open conformation. Functions as a peptidyl-prolyl cis-trans isomerase. The sequence is that of Trigger factor from Bradyrhizobium sp. (strain ORS 278).